An 880-amino-acid chain; its full sequence is A-adding tRNA nucleotidyltransferase (880 aa).

CBS domains lie at M315–V373 and M377–E435. Residue G487–R490 participates in ATP binding. 2 residues coordinate Mg(2+): D500 and D502. ATP contacts are provided by residues R574–D575, N579, D619–R628, R632, and R661.

Belongs to the tRNA nucleotidyltransferase/poly(A) polymerase family. Mg(2+) is required as a cofactor.

It carries out the reaction a tRNA with a 3' CC end + ATP = a tRNA with a 3' CCA end + diphosphate. Functionally, tRNA nucleotidyltransferase involved in the synthesis of the tRNA CCA terminus. Adds the terminal adenosine residue to tRNA. The protein is A-adding tRNA nucleotidyltransferase of Geobacter sulfurreducens (strain ATCC 51573 / DSM 12127 / PCA).